The chain runs to 149 residues: Deoxyuridine 5'-triphosphate nucleotidohydrolase (149 aa).

Residues 68-70, N81, 85-87, and M95 contribute to the substrate site; these read RSG and LID.

The protein belongs to the dUTPase family. Mg(2+) is required as a cofactor.

The enzyme catalyses dUTP + H2O = dUMP + diphosphate + H(+). The protein operates within pyrimidine metabolism; dUMP biosynthesis; dUMP from dCTP (dUTP route): step 2/2. In terms of biological role, this enzyme is involved in nucleotide metabolism: it produces dUMP, the immediate precursor of thymidine nucleotides and it decreases the intracellular concentration of dUTP so that uracil cannot be incorporated into DNA. The chain is Deoxyuridine 5'-triphosphate nucleotidohydrolase from Herminiimonas arsenicoxydans.